The sequence spans 90 residues: Small ribosomal subunit protein uS15 (90 aa).

It belongs to the universal ribosomal protein uS15 family. As to quaternary structure, part of the 30S ribosomal subunit. Forms a bridge to the 50S subunit in the 70S ribosome, contacting the 23S rRNA.

Functionally, one of the primary rRNA binding proteins, it binds directly to 16S rRNA where it helps nucleate assembly of the platform of the 30S subunit by binding and bridging several RNA helices of the 16S rRNA. Its function is as follows. Forms an intersubunit bridge (bridge B4) with the 23S rRNA of the 50S subunit in the ribosome. This Campylobacter fetus subsp. fetus (strain 82-40) protein is Small ribosomal subunit protein uS15.